The following is a 471-amino-acid chain: Alpha-amylase (471 aa).

Q1 bears the Pyrrolidone carboxylic acid mark. C28 and C84 are disulfide-bonded. Residues N98, R146, and D155 each coordinate Ca(2+). The cysteines at positions 134 and 148 are disulfide-linked. R183 contributes to the chloride binding site. D185 functions as the Nucleophile in the catalytic mechanism. H189 serves as a coordination point for Ca(2+). Residue E222 is the Proton donor of the active site. Residues N285 and R321 each contribute to the chloride site. Residues 326 to 343 (FDFTDNDQGPPQDGSGNL) are compositionally biased toward polar residues. The interval 326–346 (FDFTDNDQGPPQDGSGNLISP) is disordered. Intrachain disulfides connect C354/C360 and C425/C437.

The protein belongs to the glycosyl hydrolase 13 family. In terms of assembly, monomer. Ca(2+) serves as cofactor. It depends on chloride as a cofactor.

The catalysed reaction is Endohydrolysis of (1-&gt;4)-alpha-D-glucosidic linkages in polysaccharides containing three or more (1-&gt;4)-alpha-linked D-glucose units.. This Tenebrio molitor (Yellow mealworm beetle) protein is Alpha-amylase.